The following is a 372-amino-acid chain: 12-oxophytodienoate reductase 1 (372 aa).

Met-1 carries the post-translational modification N-acetylmethionine. FMN contacts are provided by residues 31 to 33 (PLT), Ala-64, and Gln-106. Residue His-183 participates in substrate binding. The active-site Proton donor is the Tyr-188. Arg-235 lines the FMN pocket. Residue Arg-275 participates in substrate binding. FMN is bound by residues 303 to 305 (AGG) and 326 to 327 (GR).

Belongs to the NADH:flavin oxidoreductase/NADH oxidase family. Requires FMN as cofactor. Mostly expressed in roots, also present in leaves, shoots and flowers. More abundant in cotyledons. In more details, expressed in peduncles, sepals, petals, around the abscission zone of siliques, maturing siliques and developing seeds.

It is found in the cytoplasm. It catalyses the reaction (1S,2S)-OPC-8 + NADP(+) = (9S,13S,15Z)-12-oxophyto-10,15-dienoate + NADPH + H(+). Its pathway is lipid metabolism; oxylipin biosynthesis. Functionally, specifically cleaves olefinic bonds in alpha,beta-unsaturated carbonyls and may be involved in detoxification or modification of these reactive compounds. May be involved in the biosynthesis or metabolism of oxylipin signaling molecules. In vitro, reduces 9R,13R-12-oxophytodienoic acid (9R,13R-OPDA) to 9R,13R-OPC-8:0, but only poorly 9S,13S-OPDA, the natural precursor of jasmonic acid. Can detoxify the explosive 2,4,6-trinitrotoluene (TNT) in vitro and in vivo by catalyzing its nitroreduction to form hydroxylamino-dinitrotoluene (HADNT). The polypeptide is 12-oxophytodienoate reductase 1 (Arabidopsis thaliana (Mouse-ear cress)).